The primary structure comprises 299 residues: Fibrinogen silencer-binding protein (299 aa).

A Glycyl lysine isopeptide (Lys-Gly) (interchain with G-Cter in SUMO2) cross-link involves residue lysine 94. Residues 189 to 211 (EGSESPSLSSVDMRMTSSPSSVP) are disordered. Over residues 192–209 (ESPSLSSVDMRMTSSPSS) the composition is skewed to polar residues.

Interacts with APBA1 (via PDZ 1 and 2 domains).

Its subcellular location is the nucleus. In terms of biological role, transcriptional repressor that down-regulates the expression of the fibrinogen gamma chain. Represses transcription of GSK3B gene promoter via its interaction with APBA1. In Mus musculus (Mouse), this protein is Fibrinogen silencer-binding protein (Fsbp).